A 300-amino-acid polypeptide reads, in one-letter code: Protease HtpX (300 aa).

2 consecutive transmembrane segments (helical) span residues 4 to 24 and 40 to 60; these read ILLF…TLRL and SLLI…LFIS. His145 contributes to the Zn(2+) binding site. Residue Glu146 is part of the active site. His149 provides a ligand contact to Zn(2+). A run of 2 helical transmembrane segments spans residues 153–173 and 193–213; these read GDMV…MFFA and LGFF…GLVA. Glu225 contributes to the Zn(2+) binding site.

This sequence belongs to the peptidase M48B family. Zn(2+) is required as a cofactor.

The protein resides in the cell inner membrane. The chain is Protease HtpX from Chromohalobacter salexigens (strain ATCC BAA-138 / DSM 3043 / CIP 106854 / NCIMB 13768 / 1H11).